Consider the following 611-residue polypeptide: Chaperone protein DnaK (611 aa).

A Phosphothreonine; by autocatalysis modification is found at T173. Over residues 579-592 (AAGQAEGAQGAQDA) the composition is skewed to low complexity. The tract at residues 579–598 (AAGQAEGAQGAQDAGAKKDN) is disordered.

This sequence belongs to the heat shock protein 70 family.

In terms of biological role, acts as a chaperone. The sequence is that of Chaperone protein DnaK from Bacillus cereus (strain B4264).